We begin with the raw amino-acid sequence, 491 residues long: Ketol-acid reductoisomerase (NADP(+)) (491 aa).

A KARI N-terminal Rossmann domain is found at 15–208; it reads AQLGKCRFMG…GGHRAGVLES (194 aa). NADP(+) is bound by residues 45 to 48, R68, R76, S78, and 108 to 110; these read CGAQ and DKQ. H132 is an active-site residue. Position 158 (G158) interacts with NADP(+). KARI C-terminal knotted domains follow at residues 209–344 and 345–484; these read SFVA…TAPQ and YEGK…MTDM. Positions 217, 221, 389, and 393 each coordinate Mg(2+). A substrate-binding site is contributed by S414.

It belongs to the ketol-acid reductoisomerase family. Requires Mg(2+) as cofactor.

It catalyses the reaction (2R)-2,3-dihydroxy-3-methylbutanoate + NADP(+) = (2S)-2-acetolactate + NADPH + H(+). The enzyme catalyses (2R,3R)-2,3-dihydroxy-3-methylpentanoate + NADP(+) = (S)-2-ethyl-2-hydroxy-3-oxobutanoate + NADPH + H(+). The protein operates within amino-acid biosynthesis; L-isoleucine biosynthesis; L-isoleucine from 2-oxobutanoate: step 2/4. Its pathway is amino-acid biosynthesis; L-valine biosynthesis; L-valine from pyruvate: step 2/4. Its function is as follows. Involved in the biosynthesis of branched-chain amino acids (BCAA). Catalyzes an alkyl-migration followed by a ketol-acid reduction of (S)-2-acetolactate (S2AL) to yield (R)-2,3-dihydroxy-isovalerate. In the isomerase reaction, S2AL is rearranged via a Mg-dependent methyl migration to produce 3-hydroxy-3-methyl-2-ketobutyrate (HMKB). In the reductase reaction, this 2-ketoacid undergoes a metal-dependent reduction by NADPH to yield (R)-2,3-dihydroxy-isovalerate. The polypeptide is Ketol-acid reductoisomerase (NADP(+)) (Escherichia coli (strain ATCC 8739 / DSM 1576 / NBRC 3972 / NCIMB 8545 / WDCM 00012 / Crooks)).